Here is a 286-residue protein sequence, read N- to C-terminus: UPF0761 membrane protein KPN78578_41360 (286 aa).

The next 7 helical transmembrane spans lie at 44–64 (LLSLVPLIAVVFALFAAFPMF), 74–94 (FIFANFIPATGDVIQGYIEQF), 104–124 (VGAFGLIVTSLLLMYSIDSAL), 140–160 (FAVYWMILTLGPLLAGASLAI), 183–203 (LFPLILSWAAFWLLYSIVPTT), 210–230 (AVIGALVAALLFEAGKKAFAL), and 244–264 (VISVVPILFVWVYWTWCIVLL).

It belongs to the UPF0761 family.

It is found in the cell inner membrane. The polypeptide is UPF0761 membrane protein KPN78578_41360 (Klebsiella pneumoniae subsp. pneumoniae (strain ATCC 700721 / MGH 78578)).